Reading from the N-terminus, the 291-residue chain is 33 kDa chaperonin (291 aa).

Intrachain disulfides connect Cys237-Cys239 and Cys270-Cys273.

The protein belongs to the HSP33 family. In terms of processing, under oxidizing conditions two disulfide bonds are formed involving the reactive cysteines. Under reducing conditions zinc is bound to the reactive cysteines and the protein is inactive.

Its subcellular location is the cytoplasm. Redox regulated molecular chaperone. Protects both thermally unfolding and oxidatively damaged proteins from irreversible aggregation. Plays an important role in the bacterial defense system toward oxidative stress. The polypeptide is 33 kDa chaperonin (Halalkalibacterium halodurans (strain ATCC BAA-125 / DSM 18197 / FERM 7344 / JCM 9153 / C-125) (Bacillus halodurans)).